We begin with the raw amino-acid sequence, 33 residues long: Mu/omega-theraphotoxin-Tap2a (33 aa).

Cystine bridges form between Cys-2–Cys-17, Cys-9–Cys-22, and Cys-16–Cys-29.

Belongs to the neurotoxin 10 (Hwtx-1) family. 59 (Tltx) subfamily. As to expression, expressed by the venom gland.

It localises to the secreted. Functionally, gating-modifier toxin that inhibits both sodium (Nav) and calcium (Cav3) channels by inducing hyperpolarizing shift in voltage-dependence of activation and steady state inactivation. Inhibits Nav1.1/SCN1A, Nav1.2/SCN2A, Nav1.6/SCN6A, Nav1.7/SCN9A and Cav3.1/CACNA1G sodium and calcium channels at nanomolar concentrations (IC(50)=169-621 nM). Surprisingly, selectively slows fast inactivation of Nav1.3/SCN3A. Also shows moderate inhibition of Nav1.3/SCN3A sodium channels (IC(50)=1216 nM). In Theraphosa apophysis (Goliath pinkfoot tarantula), this protein is Mu/omega-theraphotoxin-Tap2a.